Here is a 1624-residue protein sequence, read N- to C-terminus: Reverse gyrase (1624 aa).

Residues 1–42 (MKAIYRGMCPNCRGAITDERLSNKNPCEGCLSEPILSEDYNE) form an RG N-terminal-type zinc finger. Residues Cys-9, Cys-12, Cys-27, and Cys-30 each coordinate Zn(2+). ATP contacts are provided by residues Gln-89 and 106–113 (APTGMGKS). In terms of domain architecture, Helicase ATP-binding spans 93–256 (VKRIIRGKSF…KLKKQLAKLL (164 aa)). The DEAD box motif lies at 213 to 216 (DDVD). A topoisomerase I region spans residues 636-1624 (DLVKSALMIV…LYEEIKRYVR (989 aa)). One can recognise a Toprim domain in the interval 640–803 (SALMIVESPN…NIKRIEFHEV (164 aa)). Glu-646 lines the Mg(2+) pocket. The RG C-terminal-type zinc finger occupies 720-749 (IKRCRDCGHQFVDWEQKGVCPRCGSRNVHD). Positions 723, 726, 739, and 742 each coordinate Zn(2+). Asp-772 is a Mg(2+) binding site. Positions 819–1623 (NEDRVNAQLV…ELYEEIKRYV (805 aa)) constitute a Topo IA-type catalytic domain. The DOD-type homing endonuclease domain occupies 1107–1222 (IFGVILGKGT…LSVYLYQIGI (116 aa)). Tyr-1366 functions as the O-(5'-phospho-DNA)-tyrosine intermediate in the catalytic mechanism.

It in the N-terminal section; belongs to the DEAD box helicase family. DDVD subfamily. The protein in the C-terminal section; belongs to the type IA topoisomerase family. Monomer. Zn(2+) serves as cofactor. It depends on Mg(2+) as a cofactor. This protein undergoes a protein self splicing that involves a post-translational excision of the intervening region (intein) followed by peptide ligation.

The protein resides in the cytoplasm. It carries out the reaction ATP + H2O = ADP + phosphate + H(+). In terms of biological role, modifies the topological state of DNA by introducing positive supercoils in an ATP-dependent process, increasing the linking number in steps of +1. Binds to single-stranded DNA, transiently cleaves and then rejoins the ends, introducing a positive supercoil in the process. The scissile phosphodiester is attacked by the catalytic tyrosine of the enzyme, resulting in the formation of a DNA-(5'-phosphotyrosyl)-enzyme intermediate. Probably involved in rewinding DNA strands in regions of the chromosome that have opened up to allow replication, transcription, DNA repair and/or for DNA protection. The polypeptide is Reverse gyrase (Pyrococcus horikoshii (strain ATCC 700860 / DSM 12428 / JCM 9974 / NBRC 100139 / OT-3)).